The chain runs to 211 residues: Adenylate kinase (211 aa).

10-15 (GAGKGT) contributes to the ATP binding site. The tract at residues 30 to 59 (STGGILRAAIQKQTALGKKVQKVVEVGGLV) is NMP. AMP contacts are provided by residues T31, R36, 57–59 (GLV), 85–88 (GFPR), and Q92. The segment at 121–158 (GRRVCSACGSSYHVLFAQPKREGVCDRCRGVLVVREDD) is LID. Residue R122 participates in ATP binding. The Zn(2+) site is built by C125 and C128. 131–132 (SY) serves as a coordination point for ATP. Residues C145 and C148 each coordinate Zn(2+). Residues R155 and R166 each contribute to the AMP site. P194 is an ATP binding site.

The protein belongs to the adenylate kinase family. In terms of assembly, monomer.

Its subcellular location is the cytoplasm. The enzyme catalyses AMP + ATP = 2 ADP. It participates in purine metabolism; AMP biosynthesis via salvage pathway; AMP from ADP: step 1/1. Catalyzes the reversible transfer of the terminal phosphate group between ATP and AMP. Plays an important role in cellular energy homeostasis and in adenine nucleotide metabolism. In Treponema pallidum (strain Nichols), this protein is Adenylate kinase.